A 167-amino-acid polypeptide reads, in one-letter code: RVGADAEAQECHSNPRCCSFASNMPYALLSSSVSFYLPLLVMLFVYARVFVVAKRQRRLLRRELGRFPPEESPRSPSRSPSPVAGGTGEAPDGVPSCGRRPARLLPLREHRALRTLGLIMGIFSLCWLPFFLANVLRALAGPSIVPNGVFIALNWLGYANSAFNPLI.

The Extracellular portion of the chain corresponds to 1 to 25 (RVGADAEAQECHSNPRCCSFASNMP). A disulfide bond links C11 and C17. The helical transmembrane segment at 26-47 (YALLSSSVSFYLPLLVMLFVYA) threads the bilayer. At 48 to 114 (RVFVVAKRQR…LPLREHRALR (67 aa)) the chain is on the cytoplasmic side. The segment at 66 to 97 (RFPPEESPRSPSRSPSPVAGGTGEAPDGVPSC) is disordered. The helical transmembrane segment at 115–136 (TLGLIMGIFSLCWLPFFLANVL) threads the bilayer. Topologically, residues 137 to 148 (RALAGPSIVPNG) are extracellular. A helical transmembrane segment spans residues 149-167 (VFIALNWLGYANSAFNPLI).

This sequence belongs to the G-protein coupled receptor 1 family. Adrenergic receptor subfamily. ADRB3 sub-subfamily. As to quaternary structure, interacts with ARRDC3.

It is found in the cell membrane. Its function is as follows. Beta-adrenergic receptors mediate the catecholamine-induced activation of adenylate cyclase through the action of G proteins. Beta-3 is involved in the regulation of lipolysis and thermogenesis. This is Beta-3 adrenergic receptor (ADRB3) from Meriones unguiculatus (Mongolian jird).